Here is a 118-residue protein sequence, read N- to C-terminus: Large ribosomal subunit protein uL18 (118 aa).

The tract at residues 1–25 (MISKPDKNKLRQKRHRRVRGKLSGT) is disordered. Positions 10–20 (LRQKRHRRVRG) are enriched in basic residues.

The protein belongs to the universal ribosomal protein uL18 family. In terms of assembly, part of the 50S ribosomal subunit; part of the 5S rRNA/L5/L18/L25 subcomplex. Contacts the 5S and 23S rRNAs.

Its function is as follows. This is one of the proteins that bind and probably mediate the attachment of the 5S RNA into the large ribosomal subunit, where it forms part of the central protuberance. This Streptococcus pneumoniae (strain Hungary19A-6) protein is Large ribosomal subunit protein uL18.